The following is a 267-amino-acid chain: 4-hydroxy-tetrahydrodipicolinate reductase (267 aa).

Residues 10-15 (GCGGRM) and Glu-36 contribute to the NAD(+) site. Arg-37 contributes to the NADP(+) binding site. Residues 99–101 (GTT) and 123–126 (APNF) contribute to the NAD(+) site. The active-site Proton donor/acceptor is His-156. His-157 is a binding site for (S)-2,3,4,5-tetrahydrodipicolinate. Lys-160 functions as the Proton donor in the catalytic mechanism. (S)-2,3,4,5-tetrahydrodipicolinate is bound at residue 166–167 (GT).

It belongs to the DapB family.

The protein localises to the cytoplasm. It catalyses the reaction (S)-2,3,4,5-tetrahydrodipicolinate + NAD(+) + H2O = (2S,4S)-4-hydroxy-2,3,4,5-tetrahydrodipicolinate + NADH + H(+). The enzyme catalyses (S)-2,3,4,5-tetrahydrodipicolinate + NADP(+) + H2O = (2S,4S)-4-hydroxy-2,3,4,5-tetrahydrodipicolinate + NADPH + H(+). It participates in amino-acid biosynthesis; L-lysine biosynthesis via DAP pathway; (S)-tetrahydrodipicolinate from L-aspartate: step 4/4. Functionally, catalyzes the conversion of 4-hydroxy-tetrahydrodipicolinate (HTPA) to tetrahydrodipicolinate. The polypeptide is 4-hydroxy-tetrahydrodipicolinate reductase (Laribacter hongkongensis (strain HLHK9)).